The following is a 2890-amino-acid chain: Bifunctional DNA-directed RNA polymerase subunit beta-beta' (2890 aa).

A DNA-directed RNA polymerase subunit beta region spans residues 1 to 1377 (MSKKIPLKNR…DINIFGDDVD (1377 aa)). The DNA-directed RNA polymerase subunit beta' stretch occupies residues 1384 to 2890 (PIVIKEDDRP…LRTLEDDPKF (1507 aa)). The Zn(2+) site is built by Cys1449, Cys1451, Cys1465, and Cys1468. Residues Asp1849, Asp1851, and Asp1853 each coordinate Mg(2+). Residues Cys2179, Cys2253, Cys2260, and Cys2263 each contribute to the Zn(2+) site.

This sequence in the N-terminal section; belongs to the RNA polymerase beta chain family. The protein in the C-terminal section; belongs to the RNA polymerase beta' chain family. The RNAP catalytic core consists of 2 alpha, 1 beta/beta' and 1 omega subunit. When a sigma factor is associated with the core the holoenzyme is formed, which can initiate transcription. It depends on Mg(2+) as a cofactor. Zn(2+) is required as a cofactor.

The enzyme catalyses RNA(n) + a ribonucleoside 5'-triphosphate = RNA(n+1) + diphosphate. DNA-dependent RNA polymerase catalyzes the transcription of DNA into RNA using the four ribonucleoside triphosphates as substrates. The chain is Bifunctional DNA-directed RNA polymerase subunit beta-beta' (rpoBC) from Helicobacter pylori (strain Shi470).